A 117-amino-acid polypeptide reads, in one-letter code: Large ribosomal subunit protein uL18 (117 aa).

It belongs to the universal ribosomal protein uL18 family. As to quaternary structure, part of the 50S ribosomal subunit; part of the 5S rRNA/L5/L18/L25 subcomplex. Contacts the 5S and 23S rRNAs.

In terms of biological role, this is one of the proteins that bind and probably mediate the attachment of the 5S RNA into the large ribosomal subunit, where it forms part of the central protuberance. In Klebsiella pneumoniae (strain 342), this protein is Large ribosomal subunit protein uL18.